The chain runs to 356 residues: S-adenosylmethionine:tRNA ribosyltransferase-isomerase (356 aa).

This sequence belongs to the QueA family. Monomer.

The protein resides in the cytoplasm. The catalysed reaction is 7-aminomethyl-7-carbaguanosine(34) in tRNA + S-adenosyl-L-methionine = epoxyqueuosine(34) in tRNA + adenine + L-methionine + 2 H(+). Its pathway is tRNA modification; tRNA-queuosine biosynthesis. Transfers and isomerizes the ribose moiety from AdoMet to the 7-aminomethyl group of 7-deazaguanine (preQ1-tRNA) to give epoxyqueuosine (oQ-tRNA). The polypeptide is S-adenosylmethionine:tRNA ribosyltransferase-isomerase (Yersinia pseudotuberculosis serotype O:3 (strain YPIII)).